Here is a 129-residue protein sequence, read N- to C-terminus: Small ribosomal subunit protein uS12 (129 aa).

Residue aspartate 89 is modified to 3-methylthioaspartic acid.

The protein belongs to the universal ribosomal protein uS12 family. Part of the 30S ribosomal subunit. Contacts proteins S8 and S17. May interact with IF1 in the 30S initiation complex.

Functionally, with S4 and S5 plays an important role in translational accuracy. Its function is as follows. Interacts with and stabilizes bases of the 16S rRNA that are involved in tRNA selection in the A site and with the mRNA backbone. Located at the interface of the 30S and 50S subunits, it traverses the body of the 30S subunit contacting proteins on the other side and probably holding the rRNA structure together. The combined cluster of proteins S8, S12 and S17 appears to hold together the shoulder and platform of the 30S subunit. This chain is Small ribosomal subunit protein uS12, found in Rickettsia akari (strain Hartford).